Consider the following 71-residue polypeptide: Mitochondrial import protein 1 (71 aa).

A helical membrane pass occupies residues 22-44; that stretch reads YAAINLGLPFLNGVMLGFGEIFA.

The protein belongs to the MIM1 family. Component of the mitochondrial outer import machinery (MIM) complex containing at least mim1 and mim2. Interacts with mim2. Interacts with mitophagy receptor atg43.

Its subcellular location is the mitochondrion outer membrane. Its function is as follows. Component of the mitochondrial outer import machinery (MIM) complex that mediates transport of proteins into mitochondrial compartments. Promotes the insertion of tom70 into the outer mitochondrial membrane. Promotes the insertion of atg43 into the outer mitochondrial membrane. The MIM complex cooperates with the receptor tom70 in binding of precursor proteins and promotes their insertion and assembly into the outer membrane. Involved in import of the subset of proteins with multiple alpha-helical transmembrane segments. Required for the assembly of the TOM (translocase of outer membrane) receptor complex, which is responsible for the recognition and translocation of cytosolically synthesized mitochondrial preproteins. The sequence is that of Mitochondrial import protein 1 from Schizosaccharomyces pombe (strain 972 / ATCC 24843) (Fission yeast).